Consider the following 440-residue polypeptide: Trigger factor (440 aa).

In terms of domain architecture, PPIase FKBP-type spans 163 to 248 (NDTVSINFKG…INSIKEKVLP (86 aa)).

This sequence belongs to the FKBP-type PPIase family. Tig subfamily.

Its subcellular location is the cytoplasm. The enzyme catalyses [protein]-peptidylproline (omega=180) = [protein]-peptidylproline (omega=0). In terms of biological role, involved in protein export. Acts as a chaperone by maintaining the newly synthesized protein in an open conformation. Functions as a peptidyl-prolyl cis-trans isomerase. In Finegoldia magna (strain ATCC 29328 / DSM 20472 / WAL 2508) (Peptostreptococcus magnus), this protein is Trigger factor.